Here is a 334-residue protein sequence, read N- to C-terminus: D-fructose 1,6-bisphosphatase class 2/sedoheptulose 1,7-bisphosphatase (334 aa).

Mn(2+)-binding residues include D33, E57, D85, and E88. Substrate is bound by residues 88–90, Y119, 164–166, and 186–188; these read EGT, RAR, and DGD. E213 lines the Mn(2+) pocket.

The protein belongs to the FBPase class 2 family. In terms of assembly, homotetramer. Mn(2+) serves as cofactor.

The catalysed reaction is beta-D-fructose 1,6-bisphosphate + H2O = beta-D-fructose 6-phosphate + phosphate. It carries out the reaction D-sedoheptulose 1,7-bisphosphate + H2O = D-sedoheptulose 7-phosphate + phosphate. It participates in carbohydrate biosynthesis; Calvin cycle. Functionally, catalyzes the hydrolysis of fructose 1,6-bisphosphate (Fru 1,6-P2) and sedoheptulose 1,7-bisphosphate (Sed 1,7-P2) to fructose 6-phosphate and sedoheptulose 7-phosphate, respectively. The chain is D-fructose 1,6-bisphosphatase class 2/sedoheptulose 1,7-bisphosphatase from Prochlorococcus marinus (strain MIT 9313).